Here is a 935-residue protein sequence, read N- to C-terminus: ABC transporter A family member 7 (935 aa).

7 consecutive transmembrane segments (helical) span residues 34–54 (LIMI…LFDT), 338–358 (IASL…FPVI), 392–412 (FLTI…AIGL), 424–444 (FVFY…VSSV), 454–474 (ASYI…NFLI), 483–503 (WIIV…YELA), and 528–548 (DDVF…AYYI). The interval 571–591 (SLRRPSLQRQGSKVSVDMEKP) is disordered. Positions 613 to 850 (IVCDNLKKVY…YGGSYVFTMT (238 aa)) constitute an ABC transporter domain. 651-658 (GPNGAGKT) contributes to the ATP binding site.

It belongs to the ABC transporter superfamily. ABCA family. CPR flippase (TC 3.A.1.211) subfamily.

The protein localises to the membrane. The chain is ABC transporter A family member 7 (ABCA7) from Arabidopsis thaliana (Mouse-ear cress).